Consider the following 482-residue polypeptide: Protein DETOXIFICATION 9 (482 aa).

A run of 12 helical transmembrane segments spans residues valine 32–leucine 49, alanine 64–phenylalanine 84, phenylalanine 111–methionine 131, isoleucine 144–valine 164, proline 180–valine 200, glycine 209–methionine 229, alanine 261–leucine 281, serine 289–glycine 309, alanine 332–leucine 352, isoleucine 374–isoleucine 394, isoleucine 403–leucine 423, and tryptophan 435–phenylalanine 455.

This sequence belongs to the multi antimicrobial extrusion (MATE) (TC 2.A.66.1) family.

It localises to the membrane. This is Protein DETOXIFICATION 9 from Arabidopsis thaliana (Mouse-ear cress).